We begin with the raw amino-acid sequence, 478 residues long: Putative indole-3-acetic acid-amido synthetase GH3.10 (478 aa).

Belongs to the IAA-amido conjugating enzyme family.

Its function is as follows. May catalyze the synthesis of indole-3-acetic acid (IAA)-amino acid conjugates, providing a mechanism for the plant to cope with the presence of excess auxin. The protein is Putative indole-3-acetic acid-amido synthetase GH3.10 (GH3.10) of Oryza sativa subsp. japonica (Rice).